The chain runs to 315 residues: Ribosomal RNA small subunit methyltransferase H (315 aa).

Residues 61-63, Asp-80, Phe-108, Asp-124, and Gln-131 contribute to the S-adenosyl-L-methionine site; that span reads GGH. Residues 291 to 315 form a disordered region; sequence PQPEEEEKNPRSRSAKLRFAQRKPL. Over residues 301-315 the composition is skewed to basic residues; it reads RSRSAKLRFAQRKPL.

Belongs to the methyltransferase superfamily. RsmH family.

It localises to the cytoplasm. It carries out the reaction cytidine(1402) in 16S rRNA + S-adenosyl-L-methionine = N(4)-methylcytidine(1402) in 16S rRNA + S-adenosyl-L-homocysteine + H(+). Functionally, specifically methylates the N4 position of cytidine in position 1402 (C1402) of 16S rRNA. The sequence is that of Ribosomal RNA small subunit methyltransferase H from Crocosphaera subtropica (strain ATCC 51142 / BH68) (Cyanothece sp. (strain ATCC 51142)).